A 212-amino-acid chain; its full sequence is Bcl-2-related ovarian killer protein (212 aa).

The residue at position 7 (S7) is a Phosphoserine. Positions 15-45 (MDAFDRSPTDKELVAQAKALGREYVHARLLR) are interactions with ITPR1. Glycyl lysine isopeptide (Lys-Gly) (interchain with G-Cter in ubiquitin) cross-links involve residues K25 and K32. Positions 32–44 (KALGREYVHARLL) match the BH4 motif. The BH3 motif lies at 66-82 (VCAVLLRLGDELEMIRP). A nuclear export signal region spans residues 70–78 (LLRLGDELE). A BH1 motif is present at residues 112–131 (HIFSAGITWGKVVSLYAVAA). Residues K159 and K176 each participate in a glycyl lysine isopeptide (Lys-Gly) (interchain with G-Cter in ubiquitin) cross-link. The BH2 signature appears at 164–178 (WLRRRGGWTDVLKCV). The chain crosses the membrane as a helical span at residues 189–209 (WLVAALCSFGRFLKAAFFVLL).

It belongs to the Bcl-2 family. As to quaternary structure, monomer; positively regulates apoptotic process. Homodimer. Heterodimer. Oligomer; promoted by apoptotic stimuli and BH3-only proteins; mediates constitutive activation. Interacts (via BH4 domain) with ITPR1; enhances BOK expression and stabilization; limits apoptosis and prevents ubiquitination and then degradation; protects ITPR1 from proteolysis by CASP3 during apoptosis. Interacts with ITPR2 and ITPR3; binds most strongly to ITPR2, and barely to ITPR3; regulates their expression. Interacts with XPO1; translocates to the cytoplasm. Interacts with BNIP3; promotes oligomerization. Ubiquitinated by AMFR/gp78 E3 ubiquitin ligase complex; mediates degradation by ubiquitin-proteasome pathway in a VCP/p97-dependent manner; prevents from pro-apoptotic activity; promotes degradation of newly synthesized proteins that are not ITPR1 associated. In terms of tissue distribution, expressed mainly in oocytes; weak expression in granulosa cells of the developing follicles. In adult human ovaries, expressed in granulosa cells at all follicular stages, but expression in primordial/primary follicles granulosa cell is stronger than in secondary and antral follicles.

The protein resides in the mitochondrion membrane. Its subcellular location is the endoplasmic reticulum membrane. It localises to the mitochondrion inner membrane. The protein localises to the cytoplasm. It is found in the nucleus. The protein resides in the mitochondrion. Its subcellular location is the endoplasmic reticulum. It localises to the mitochondrion outer membrane. The protein localises to the early endosome membrane. It is found in the recycling endosome membrane. The protein resides in the nucleus outer membrane. Its subcellular location is the golgi apparatus. It localises to the cis-Golgi network membrane. The protein localises to the trans-Golgi network membrane. It is found in the membrane. Functionally, apoptosis regulator that functions through different apoptotic signaling pathways. Plays a roles as pro-apoptotic protein that positively regulates intrinsic apoptotic process in a BAX- and BAK1-dependent manner or in a BAX- and BAK1-independent manner. In response to endoplasmic reticulum stress promotes mitochondrial apoptosis through downstream BAX/BAK1 activation and positive regulation of PERK-mediated unfolded protein response. Activates apoptosis independently of heterodimerization with survival-promoting BCL2 and BCL2L1 through induction of mitochondrial outer membrane permeabilization, in a BAX- and BAK1-independent manner, in response to inhibition of ERAD-proteasome degradation system, resulting in cytochrome c release. In response to DNA damage, mediates intrinsic apoptotic process in a TP53-dependent manner. Plays a role in granulosa cell apoptosis by CASP3 activation. Plays a roles as anti-apoptotic protein during neuronal apoptotic process, by negatively regulating poly ADP-ribose polymerase-dependent cell death through regulation of neuronal calcium homeostasis and mitochondrial bioenergetics in response to NMDA excitation. In addition to its role in apoptosis, may regulate trophoblast cell proliferation during the early stages of placental development, by acting on G1/S transition through regulation of CCNE1 expression. May also play a role as an inducer of autophagy by disrupting interaction between MCL1 and BECN1. Its function is as follows. Pro-apoptotic molecule exerting its function through the mitochondrial pathway. The chain is Bcl-2-related ovarian killer protein from Homo sapiens (Human).